Here is a 433-residue protein sequence, read N- to C-terminus: C2H2 type master regulator of conidiophore development brlA (433 aa).

2 disordered regions span residues 23–64 (PSEC…SHYH) and 240–265 (KTHT…PVSR). Residues 30–48 (TSSFSPLDSPTPTPTSLYS) are compositionally biased toward low complexity. Residues 240-264 (KTHTPSTPHRSVSMGTPSGSDTPVS) are compositionally biased toward polar residues. 2 consecutive C2H2-type zinc fingers follow at residues 321-345 (FKCK…MKSH) and 351-376 (HVCW…TKTH). Residues 391 to 416 (ETSQDFDPDFRGQLTPDGRPIYGSKL) form a disordered region.

Its subcellular location is the nucleus. BrlA, abaA and wetA are pivotal regulators of conidiophore development and conidium maturation. They act individually and together to regulate their own expression and that of numerous other sporulation-specific genes. Binds promoters of target genes at brlA response elements (BREs) containing the conserved sequence 5'-(C/A)(A/G)AGGG(G/A)-3'. Is not required for penicillin V production. The chain is C2H2 type master regulator of conidiophore development brlA from Penicillium rubens (strain ATCC 28089 / DSM 1075 / NRRL 1951 / Wisconsin 54-1255) (Penicillium chrysogenum).